We begin with the raw amino-acid sequence, 358 residues long: Isopentenyl-diphosphate delta-isomerase (358 aa).

12-13 contributes to the substrate binding site; that stretch reads RK. Residues 69 to 71, S99, and N128 contribute to the FMN site; that span reads AMT. Residue Q158 coordinates substrate. E159 is a Mg(2+) binding site. FMN-binding positions include K190, T220, 267–269, and 288–289; these read GIR and AG.

Belongs to the IPP isomerase type 2 family. As to quaternary structure, homooctamer. Dimer of tetramers. It depends on FMN as a cofactor. The cofactor is NADPH. Mg(2+) is required as a cofactor.

It is found in the cytoplasm. The enzyme catalyses isopentenyl diphosphate = dimethylallyl diphosphate. Involved in the biosynthesis of isoprenoids. Catalyzes the 1,3-allylic rearrangement of the homoallylic substrate isopentenyl (IPP) to its allylic isomer, dimethylallyl diphosphate (DMAPP). The sequence is that of Isopentenyl-diphosphate delta-isomerase from Listeria welshimeri serovar 6b (strain ATCC 35897 / DSM 20650 / CCUG 15529 / CIP 8149 / NCTC 11857 / SLCC 5334 / V8).